Consider the following 233-residue polypeptide: DNA repair protein RecO (233 aa).

It belongs to the RecO family.

Functionally, involved in DNA repair and RecF pathway recombination. This is DNA repair protein RecO from Pseudomonas aeruginosa (strain LESB58).